Reading from the N-terminus, the 406-residue chain is Putative permease Rv2963 (406 aa).

Helical transmembrane passes span 30-50, 67-87, 111-131, 132-152, 208-228, 246-266, 278-298, 312-332, and 361-381; these read WEILWALILGFALSAVVQAVV, LVIATGLGAASSSCSYAAVAL, LVVELGIILALLMGWQFTAAE, FVGGPIMILVLAVLFRLFVGA, LAILRDLILGLLIAGAIAAWV, AVWGPIIGPIVAIVSFVCSIG, GISFGGVIAFIFADLLILPIL, VLLGTFYASMVVAGYLIELLF, and VIFLVIAAALVVRFITSGGLP.

This sequence belongs to the UPF0718 family.

It localises to the cell membrane. The protein is Putative permease Rv2963 of Mycobacterium tuberculosis (strain ATCC 25618 / H37Rv).